We begin with the raw amino-acid sequence, 504 residues long: MXXXXGYLEFDGARQQSFLYPLFFREYIYVLAYDHRLNRLNRNRSIFVENVDSDKKYSSLIVKRLILRMYEQNCLIFSIKDLNQNTSLGHTNLFYYQMISVLFAVIVEIPFSLRLGSSFEGKQLKKSYNLQSIHSIFPFLEDKLTHFNYVLDVLIPYPIHLEILVQTLRYRVKDASSLHFFRFCLYESCNWKNFDIKKTSILNPRFFLFLYNSHVCEYESIFFVLRKRSSHLRSTSYKVLFERILFYVKIQHFFKVFVNNFPAILGLLKDPFLHYVRYHGKCILATKDTPLLMNKWKYYFVNLWQCYFSVWFQPQKVNINQLSKDNFEFMGYLSSLRLNPLVVRSQMLENSFLIDNVRIKLYSKIPISSIIGSLAKDKFCNVLGHPISKATWADSSDSDILNRFVRICRNISHYYSGSSKKKNLYRIKYILRLCCVKTLARKHKSTVRAFLKRLGSGLLEEFLTGEDQVLSLIFPRSYYASKRLYRVRIWYLDILSLNDLVNHE.

It belongs to the intron maturase 2 family. MatK subfamily.

The protein localises to the plastid. It is found in the chloroplast. In terms of biological role, usually encoded in the trnK tRNA gene intron. Probably assists in splicing its own and other chloroplast group II introns. The chain is Maturase K from Thlaspi arvense (Field penny-cress).